A 635-amino-acid chain; its full sequence is Sodium- and chloride-dependent creatine transporter 1 (635 aa).

The disordered stretch occupies residues 1-28 (MAKKSAENGIYSVSGDEKKGPLIAPGPD). The Cytoplasmic portion of the chain corresponds to 1–60 (MAKKSAENGIYSVSGDEKKGPLIAPGPDGAPAKGDGPVGLGTPGGRLAVPPRETWTRQMD). T42 is modified (phosphothreonine). A helical membrane pass occupies residues 61–81 (FIMSCVGFAVGLGNVWRFPYL). The Extracellular segment spans residues 82–87 (CYKNGG). A helical transmembrane segment spans residues 88–108 (GVFLIPYVLIALVGGIPIFFL). The Cytoplasmic portion of the chain corresponds to 109-138 (EISLGQFMKAGSINVWNICPLFKGLGYASM). A helical membrane pass occupies residues 139-159 (VIVFYCNTYYIMVLAWGFYYL). Residues 160–230 (VKSFTTTLPW…LSGGLEVPGA (71 aa)) are Extracellular-facing. N-linked (GlcNAc...) asparagine glycosylation is found at N192 and N197. Residues 231–251 (LNWEVTLCLLACWVLVYFCVW) traverse the membrane as a helical segment. Over 252–269 (KGVKSTGKIVYFTATFPY) the chain is Cytoplasmic. The helical transmembrane segment at 270-290 (VVLVVLLVRGVLLPGALDGII) threads the bilayer. The Extracellular portion of the chain corresponds to 291–304 (YYLKPDWSKLGSPQ). The chain crosses the membrane as a helical span at residues 305–325 (VWIDAGTQIFFSYAIGLGALT). The Cytoplasmic portion of the chain corresponds to 326–341 (ALGSYNRFNNNCYKDA). A helical transmembrane segment spans residues 342 to 362 (IILALINSGTSFFAGFVVFSI). Residues 363–394 (LGFMAAEQGVHISKVAESGPGLAFIAYPRAVT) lie on the Extracellular side of the membrane. A helical membrane pass occupies residues 395–415 (LMPVAPLWAALFFFMLLLLGL). The Cytoplasmic portion of the chain corresponds to 416 to 444 (DSQFVGVEGFITGLLDLLPASYYFRFQRE). A helical transmembrane segment spans residues 445–465 (ISVALCCALCFVIDLSMVTDG). Topologically, residues 466-479 (GMYVFQLFDYYSAS) are extracellular. The helical transmembrane segment at 480–500 (GTTLLWQAFWECVVVAWVYGA) threads the bilayer. Residues 501 to 520 (DRFMDDIACMIGYRPCPWMK) lie on the Cytoplasmic side of the membrane. The chain crosses the membrane as a helical span at residues 521 to 541 (WCWSFFTPLVCMGIFIFNVVY). Topologically, residues 542–560 (YEPLVYNNTYVYPWWGEAM) are extracellular. Residue N548 is glycosylated (N-linked (GlcNAc...) asparagine). Residues 561–581 (GWAFALSSMLCVPLHLLGCLL) traverse the membrane as a helical segment. The Cytoplasmic portion of the chain corresponds to 582-635 (RAKGTMAERWQHLTQPIWGLHHLEYRAQDADVRGLTTLTPVSESSKVVVVESVM). A phosphothreonine mark is found at T617 and T620. Residue S623 is modified to Phosphoserine.

It belongs to the sodium:neurotransmitter symporter (SNF) (TC 2.A.22) family. SLC6A8 subfamily. In terms of processing, glycosylated. Predominantly expressed in skeletal muscle and kidney. Also found in brain, heart, colon, testis and prostate.

Its subcellular location is the cell membrane. It localises to the apical cell membrane. It carries out the reaction creatine(out) + chloride(out) + 2 Na(+)(out) = creatine(in) + chloride(in) + 2 Na(+)(in). Its function is as follows. Creatine:sodium symporter which mediates the uptake of creatine. Plays an important role in supplying creatine to the brain via the blood-brain barrier. This chain is Sodium- and chloride-dependent creatine transporter 1 (SLC6A8), found in Homo sapiens (Human).